The primary structure comprises 366 residues: Dehydrogenase aclE (366 aa).

The N-terminal stretch at 1 to 19 (MSKRIRLGIVGLSADPSHC) is a signal peptide. Residue N330 is glycosylated (N-linked (GlcNAc...) asparagine).

This sequence belongs to the Gfo/Idh/MocA family.

It functions in the pathway mycotoxin biosynthesis. Its function is as follows. Dehydrogenase; part of the gene cluster that mediates the biosynthesis of aspirochlorine (or antibiotic A30641), an unusual halogenated spiro compound with distinctive antifungal properties due to selective inhibition of protein biosynthesis, and which is also active against bacteria, viruses, and murine tumor cells. The non-ribosomal peptide synthetase (NRPS) aclP is responsible the formation of the diketopiperazine (DKP) core from the condensation of 2 phenylalanine residues. One Phe residue is tailored into chlorotyrosine by hydroxylation and chlorination, whereas the second Phe undergoes an unprecedented C-C bond cleavage to be converted into glycine. After formation of the DKP, sulfur is incorporated into the DKP by conjugation with glutathione by aclG, followed by its stepwise degradation to the thiol by aclI, aclJ and aclK, and the dithiol oxidation by aclT. In addition, oxygenases (aclB, aclC, aclL and aclO) and O-methyltransferases (aclM and aclU) act as tailoring enzymes to produce the intermediate dechloroaspirochlorine. Ultimately, chlorination of dechloroaspirochlorine by the halogenase aclH is the last step in the aspirochlorine pathway. The protein is Dehydrogenase aclE of Aspergillus oryzae (strain ATCC 42149 / RIB 40) (Yellow koji mold).